Consider the following 1045-residue polypeptide: MSDSQQSVEVLNQLLARLSVATPDNRDEVATEVSSFVNGNIIEHDAPEHFFNGLAKAIKDKKSAVNALAAVSHVASTSGLAPSVEPYVVALVPAILEQTGSKDKDVQSAANAALHAVVTAVNPVAVKAVLPHLTKSLSETNKWQEKVAVLSAISALVDQAKSQISLRMTELIPVLSEAMWDTKKEVKNAATATMTKATETVENKDIERFIPKLIECIANPSEVPETVHLLGATTFVAEVTPATLSIMTPLLSRGLAERETPIKRKSAVIIDNMCKLVEDPQIVAPFLNKLLPGLKNNFSVIADPEAREVTLRGLKTLRRVGAVGEGDVLPEISHAGDPATTLGVLDSLLKTENIAKKFRPAVEYISCIGGDLIDERIIDQQTWFTHVLPYMTIFLHQNQAKEILDEFRKRAVDNIPEPPKFDDEEEEGEDLCNCEFSLAYGAKILLNRTQLRLKRGRRYGLCGPNGSGKSTLMRAIANGQVDGFPSQEECRTVYVEHDIDGTHAETSVLDFVFQGDVGTKEAISAKLKEFGFDDEMIVMPIAALSGGWKMKLALARAVLKNADILLLDEPTNHLDTVNVAWLTNYLITCGITSIVVSHDSGFLDNICQYIIHYEGLKLRKYKGNLSALVERVPSAKSYYELGASDLEFRFPEPGYLEGVKTKQKAIVKVSNMTFQYPGTSKPQISDVSFQCSLSSRIAVIGPNGAGKSTLINVLTGELLPTTGEVYTHENIRIAYIKQHAFAHIESHLDKTPSEYIQWRFQTGEDRETMDRANRQINEDDAQAMNKIFKIDGTPRRIAGIHSRRKFKNSYEYECSFLLGENIGMKSERWVPMMSVDNAWLPRGEVIESHGKMVAEVDMKEALASGQFRPLTRKEIEEHCAMLGLDAELVSHSRIRGLSGGQKVKLVLAAGTWQRPHLIVLDEPTNYLDRDSLGALSKALKEFEGGVIIITHSAEFTKDLTEEVWAVRDGLMTPSGHNWVSGQGSGPRLEKKEDEEDKFDAMGNKISSGTKKTKLSSAELRKKKKERMKKKKELGDAYVSDDDADF.

Positions 42, 44, and 83 each coordinate ADP. HEAT repeat units follow at residues P86 to P123, A125 to S162, L166 to N203, L171 to F209, D205 to P241, A242 to D279, and P285 to V323. ADP contacts are provided by T392 and H396. 2 consecutive ABC transporter domains span residues E426 to L641 and V667 to D993. ADP contacts are provided by N703, E922, N925, and H951. Positions G975–F1045 are disordered. The segment covering R1020–K1031 has biased composition (basic residues).

This sequence belongs to the ABC transporter superfamily. ABCF family. EF3 subfamily.

It is found in the cytoplasm. The protein localises to the cytosol. The enzyme catalyses ATP + H2O = ADP + phosphate + H(+). Its pathway is protein biosynthesis; polypeptide chain elongation. In terms of biological role, ribosome-dependent ATPase that functions in cytoplasmic translation elongation. Required for the ATP-dependent release of deacylated tRNA from the ribosomal E-site during protein biosynthesis. Stimulates the eEF1A-dependent binding of aminoacyl-tRNA to the ribosomal A-site, which has reduced affinity for tRNA as long as the E-site is occupied. Assists translation termination by stimulating the release of nascent protein from the ribosome by release factors. The chain is Elongation factor 3 from Zygosaccharomyces rouxii (strain ATCC 2623 / CBS 732 / NBRC 1130 / NCYC 568 / NRRL Y-229).